Reading from the N-terminus, the 292-residue chain is Formamidopyrimidine-DNA glycosylase (292 aa).

P2 (schiff-base intermediate with DNA) is an active-site residue. E3 (proton donor) is an active-site residue. K58 serves as the catalytic Proton donor; for beta-elimination activity. Residues H103, R122, and K165 each contribute to the DNA site. An FPG-type zinc finger spans residues 256-292; the sequence is RVYDRALHPCPTPGCKGEISRITQGGRSSFFCSMCQK. R282 functions as the Proton donor; for delta-elimination activity in the catalytic mechanism.

The protein belongs to the FPG family. Monomer. The cofactor is Zn(2+).

The catalysed reaction is Hydrolysis of DNA containing ring-opened 7-methylguanine residues, releasing 2,6-diamino-4-hydroxy-5-(N-methyl)formamidopyrimidine.. It carries out the reaction 2'-deoxyribonucleotide-(2'-deoxyribose 5'-phosphate)-2'-deoxyribonucleotide-DNA = a 3'-end 2'-deoxyribonucleotide-(2,3-dehydro-2,3-deoxyribose 5'-phosphate)-DNA + a 5'-end 5'-phospho-2'-deoxyribonucleoside-DNA + H(+). Involved in base excision repair of DNA damaged by oxidation or by mutagenic agents. Acts as a DNA glycosylase that recognizes and removes damaged bases. Has a preference for oxidized purines, such as 7,8-dihydro-8-oxoguanine (8-oxoG). Has AP (apurinic/apyrimidinic) lyase activity and introduces nicks in the DNA strand. Cleaves the DNA backbone by beta-delta elimination to generate a single-strand break at the site of the removed base with both 3'- and 5'-phosphates. The sequence is that of Formamidopyrimidine-DNA glycosylase from Methylocella silvestris (strain DSM 15510 / CIP 108128 / LMG 27833 / NCIMB 13906 / BL2).